The chain runs to 301 residues: Tyrosine recombinase XerC (301 aa).

In terms of domain architecture, Core-binding (CB) spans 1–85; it reads MELISLFKQY…ALRSFYRFLV (85 aa). The Tyr recombinase domain maps to 106-292; that stretch reads KLPHFFYEKE…TKEKLQESYR (187 aa). Residues Arg-147, Lys-171, His-244, Arg-247, and His-270 contribute to the active site. Residue Tyr-279 is the O-(3'-phospho-DNA)-tyrosine intermediate of the active site.

Belongs to the 'phage' integrase family. XerC subfamily. Forms a cyclic heterotetrameric complex composed of two molecules of XerC and two molecules of XerD.

The protein resides in the cytoplasm. In terms of biological role, site-specific tyrosine recombinase, which acts by catalyzing the cutting and rejoining of the recombining DNA molecules. The XerC-XerD complex is essential to convert dimers of the bacterial chromosome into monomers to permit their segregation at cell division. It also contributes to the segregational stability of plasmids. This Pediococcus pentosaceus (strain ATCC 25745 / CCUG 21536 / LMG 10740 / 183-1w) protein is Tyrosine recombinase XerC.